A 313-amino-acid chain; its full sequence is Sideroflexin-4 (313 aa).

2 helical membrane-spanning segments follow: residues 87 to 107 and 141 to 161; these read AAFLPVTAPMVFLLMMPDTGI and TLLGAGVSVSSTFIGLIPHLF. K173 bears the N6-acetyllysine mark. 3 helical membrane-spanning segments follow: residues 175 to 191, 230 to 247, and 269 to 289; these read TLPIVFLAQVSGMNVFA, AVLFGTSALAPELFIHIF, and FFMMGLMVPVSFSMFPQIGQI.

This sequence belongs to the sideroflexin family. Largely restricted to kidney, brain and heart.

It localises to the mitochondrion inner membrane. In terms of biological role, mitochondrial amino-acid transporter. Does not act as a serine transporter: not able to mediate transport of serine into mitochondria. In Mus musculus (Mouse), this protein is Sideroflexin-4.